Here is a 313-residue protein sequence, read N- to C-terminus: Olfactory receptor 4M1 (313 aa).

Topologically, residues 1-25 are extracellular; that stretch reads MEPANDTTVTEFILTGLSQTREVQL. Residue asparagine 5 is glycosylated (N-linked (GlcNAc...) asparagine). A helical membrane pass occupies residues 26-46; that stretch reads VLFVIFLSFYLFILPVNILII. Topologically, residues 47-57 are cytoplasmic; the sequence is CTIRLDSHLSS. A helical membrane pass occupies residues 58–78; the sequence is PMYFLLANLAFLDIWYSSITA. At 79–97 the chain is on the extracellular side; it reads PKMLVDFFVERKIISFGGC. Cysteine 97 and cysteine 179 are oxidised to a cystine. The helical transmembrane segment at 98 to 118 threads the bilayer; the sequence is IAQLFFLHFVGASEMFLLTVM. The Cytoplasmic segment spans residues 119 to 142; that stretch reads AFDRYAAICRPLHYATIMNRRLCC. Residues 143–163 form a helical membrane-spanning segment; that stretch reads ILVALSWTGGFVHSIIQVALI. At 164-204 the chain is on the extracellular side; that stretch reads VRLPFCGPNELDNYFCDITQVVRIACANTFLEEMVMIFSSG. Residues 205 to 225 form a helical membrane-spanning segment; the sequence is LISVVCFIALLMSYAFLLTML. The Cytoplasmic portion of the chain corresponds to 226–238; sequence KKHSSSGESTSRA. A helical membrane pass occupies residues 239-259; sequence ISTCYSHITIVVLMFGPSIYI. Residues 260-270 are Extracellular-facing; sequence YARPFDSFSLD. Residues 271 to 291 form a helical membrane-spanning segment; sequence KVVSVFHTVIFPLLNPIIYTL. Over 292–313 the chain is Cytoplasmic; that stretch reads RNKEVKAAMRKLVNRYIFCKEK.

It belongs to the G-protein coupled receptor 1 family. As to expression, highly expressed in liver but not in adipose tissue. Also expressed at high level in testis.

Its subcellular location is the cell membrane. Its function is as follows. Olfactory receptor that acts as a receptor of Asprosin hormone at the surface of hepatocytes to promote hepatocyte glucose release. Also binds Asprosin in the arcuate nucleus of the hypothalamus, thereby stimulating appetite by promoting orexigenic AgRP neuronal activity. In testis, Asprosin-binding promotes sperm progressive motility and enhances male fertility. The activity of this receptor is mediated by G proteins which activate adenylyl cyclase, resulting in an elevation of intracellular cAMP. This chain is Olfactory receptor 4M1, found in Mus musculus (Mouse).